Consider the following 226-residue polypeptide: Leucyl/phenylalanyl-tRNA--protein transferase (226 aa).

Belongs to the L/F-transferase family.

It is found in the cytoplasm. The catalysed reaction is N-terminal L-lysyl-[protein] + L-leucyl-tRNA(Leu) = N-terminal L-leucyl-L-lysyl-[protein] + tRNA(Leu) + H(+). It carries out the reaction N-terminal L-arginyl-[protein] + L-leucyl-tRNA(Leu) = N-terminal L-leucyl-L-arginyl-[protein] + tRNA(Leu) + H(+). The enzyme catalyses L-phenylalanyl-tRNA(Phe) + an N-terminal L-alpha-aminoacyl-[protein] = an N-terminal L-phenylalanyl-L-alpha-aminoacyl-[protein] + tRNA(Phe). Functions in the N-end rule pathway of protein degradation where it conjugates Leu, Phe and, less efficiently, Met from aminoacyl-tRNAs to the N-termini of proteins containing an N-terminal arginine or lysine. This Azotobacter vinelandii (strain DJ / ATCC BAA-1303) protein is Leucyl/phenylalanyl-tRNA--protein transferase.